The primary structure comprises 48 residues: ATP synthase protein 8 (48 aa).

A helical transmembrane segment spans residues 12–32; it reads LLTFGMLAISMLLYLVSTIIL.

The protein belongs to the ATPase protein 8 family. As to quaternary structure, F-type ATPases have 2 components, CF(1) - the catalytic core - and CF(0) - the membrane proton channel.

It localises to the mitochondrion membrane. Mitochondrial membrane ATP synthase (F(1)F(0) ATP synthase or Complex V) produces ATP from ADP in the presence of a proton gradient across the membrane which is generated by electron transport complexes of the respiratory chain. F-type ATPases consist of two structural domains, F(1) - containing the extramembraneous catalytic core and F(0) - containing the membrane proton channel, linked together by a central stalk and a peripheral stalk. During catalysis, ATP synthesis in the catalytic domain of F(1) is coupled via a rotary mechanism of the central stalk subunits to proton translocation. Part of the complex F(0) domain. Minor subunit located with subunit a in the membrane. This chain is ATP synthase protein 8 (ATP8), found in Debaryomyces hansenii (strain ATCC 36239 / CBS 767 / BCRC 21394 / JCM 1990 / NBRC 0083 / IGC 2968) (Yeast).